We begin with the raw amino-acid sequence, 355 residues long: Uroporphyrinogen decarboxylase (355 aa).

Residues 27–31 (RQAGR), Asp-77, Tyr-154, Thr-209, and His-327 contribute to the substrate site.

The protein belongs to the uroporphyrinogen decarboxylase family. Homodimer.

The protein resides in the cytoplasm. It carries out the reaction uroporphyrinogen III + 4 H(+) = coproporphyrinogen III + 4 CO2. It participates in porphyrin-containing compound metabolism; protoporphyrin-IX biosynthesis; coproporphyrinogen-III from 5-aminolevulinate: step 4/4. In terms of biological role, catalyzes the decarboxylation of four acetate groups of uroporphyrinogen-III to yield coproporphyrinogen-III. The polypeptide is Uroporphyrinogen decarboxylase (Aeromonas salmonicida (strain A449)).